Here is a 323-residue protein sequence, read N- to C-terminus: NAC transcription factor 25 (323 aa).

The 162-residue stretch at 16 to 177 folds into the NAC domain; that stretch reads LPPGFRFHPT…DWVLCRIYKK (162 aa). The DNA-binding element occupies 114-183; the sequence is VGVKKALVFY…IYKKNSSQRP (70 aa). Positions 201 to 221 are enriched in low complexity; sequence KSSANSSSTSVLDNNDNNNNN. Positions 201–223 are disordered; sequence KSSANSSSTSVLDNNDNNNNNNE.

Expressed specifically in the tapetum.

Its subcellular location is the nucleus. Its function is as follows. Transcription factor of the NAC family. May be associated with anther development and pollen production. Required for normal seed development and morphology. In Arabidopsis thaliana (Mouse-ear cress), this protein is NAC transcription factor 25 (NAC025).